Here is a 242-residue protein sequence, read N- to C-terminus: RxLR effector protein PexRD15 (242 aa).

The N-terminal stretch at 1–24 is a signal peptide; the sequence is MMKSLYAVNLVLLLLLAFFAPAPA. The RxLR-dEER signature appears at 48–66; it reads RLLRAHSSDKEEQKEEEER.

The protein belongs to the RxLR effector family.

The protein resides in the secreted. Its subcellular location is the host cell membrane. Effector that enhances P.infestans colonization of Nicotiana benthamiana leaves. The sequence is that of RxLR effector protein PexRD15 from Phytophthora infestans (strain T30-4) (Potato late blight agent).